The chain runs to 391 residues: 8-amino-7-oxononanoate synthase (391 aa).

Arginine 19 serves as a coordination point for substrate. 106–107 lines the pyridoxal 5'-phosphate pocket; the sequence is GY. Substrate is bound at residue histidine 131. Pyridoxal 5'-phosphate is bound by residues serine 178, histidine 206, and threonine 234. An N6-(pyridoxal phosphate)lysine modification is found at lysine 237. Substrate is bound at residue threonine 353.

Belongs to the class-II pyridoxal-phosphate-dependent aminotransferase family. BioF subfamily. Homodimer. It depends on pyridoxal 5'-phosphate as a cofactor.

The catalysed reaction is 6-carboxyhexanoyl-[ACP] + L-alanine + H(+) = (8S)-8-amino-7-oxononanoate + holo-[ACP] + CO2. The protein operates within cofactor biosynthesis; biotin biosynthesis. Functionally, catalyzes the decarboxylative condensation of pimeloyl-[acyl-carrier protein] and L-alanine to produce 8-amino-7-oxononanoate (AON), [acyl-carrier protein], and carbon dioxide. The polypeptide is 8-amino-7-oxononanoate synthase (Geobacter sulfurreducens (strain ATCC 51573 / DSM 12127 / PCA)).